Reading from the N-terminus, the 288-residue chain is Pantothenate synthetase (288 aa).

30–37 (MGFLHEGH) serves as a coordination point for ATP. The Proton donor role is filled by histidine 37. Glutamine 61 contributes to the (R)-pantoate binding site. Residue glutamine 61 participates in beta-alanine binding. 147-150 (GLKD) lines the ATP pocket. Position 153 (glutamine 153) interacts with (R)-pantoate. ATP-binding positions include valine 176 and 184–187 (KSSR).

Belongs to the pantothenate synthetase family. In terms of assembly, homodimer.

It is found in the cytoplasm. It carries out the reaction (R)-pantoate + beta-alanine + ATP = (R)-pantothenate + AMP + diphosphate + H(+). It participates in cofactor biosynthesis; (R)-pantothenate biosynthesis; (R)-pantothenate from (R)-pantoate and beta-alanine: step 1/1. Catalyzes the condensation of pantoate with beta-alanine in an ATP-dependent reaction via a pantoyl-adenylate intermediate. The chain is Pantothenate synthetase from Bacillus pumilus (strain SAFR-032).